The chain runs to 461 residues: Bifunctional protein GlmU (461 aa).

The interval 1 to 229 is pyrophosphorylase; sequence MNKYVVILAA…FSESLGVNDR (229 aa). Residues 8 to 11, Lys-22, Gln-72, and 77 to 78 contribute to the UDP-N-acetyl-alpha-D-glucosamine site; these read LAAG and GT. Residue Asp-102 participates in Mg(2+) binding. UDP-N-acetyl-alpha-D-glucosamine contacts are provided by Gly-139, Glu-154, Asn-169, and Asn-227. Residue Asn-227 coordinates Mg(2+). The segment at 230–250 is linker; the sequence is IALAQATKIMQRRINEEHMRN. The tract at residues 251 to 461 is N-acetyltransferase; the sequence is GVSFIDPDTA…LPLAKDKEWE (211 aa). Arg-332 and Lys-350 together coordinate UDP-N-acetyl-alpha-D-glucosamine. Residue His-362 is the Proton acceptor of the active site. Tyr-365 and Asn-376 together coordinate UDP-N-acetyl-alpha-D-glucosamine. Acetyl-CoA-binding positions include 385–386, Ala-422, and Arg-439; that span reads NY.

It in the N-terminal section; belongs to the N-acetylglucosamine-1-phosphate uridyltransferase family. This sequence in the C-terminal section; belongs to the transferase hexapeptide repeat family. In terms of assembly, homotrimer. Mg(2+) is required as a cofactor.

It is found in the cytoplasm. The enzyme catalyses alpha-D-glucosamine 1-phosphate + acetyl-CoA = N-acetyl-alpha-D-glucosamine 1-phosphate + CoA + H(+). The catalysed reaction is N-acetyl-alpha-D-glucosamine 1-phosphate + UTP + H(+) = UDP-N-acetyl-alpha-D-glucosamine + diphosphate. The protein operates within nucleotide-sugar biosynthesis; UDP-N-acetyl-alpha-D-glucosamine biosynthesis; N-acetyl-alpha-D-glucosamine 1-phosphate from alpha-D-glucosamine 6-phosphate (route II): step 2/2. It functions in the pathway nucleotide-sugar biosynthesis; UDP-N-acetyl-alpha-D-glucosamine biosynthesis; UDP-N-acetyl-alpha-D-glucosamine from N-acetyl-alpha-D-glucosamine 1-phosphate: step 1/1. It participates in bacterial outer membrane biogenesis; LPS lipid A biosynthesis. Catalyzes the last two sequential reactions in the de novo biosynthetic pathway for UDP-N-acetylglucosamine (UDP-GlcNAc). The C-terminal domain catalyzes the transfer of acetyl group from acetyl coenzyme A to glucosamine-1-phosphate (GlcN-1-P) to produce N-acetylglucosamine-1-phosphate (GlcNAc-1-P), which is converted into UDP-GlcNAc by the transfer of uridine 5-monophosphate (from uridine 5-triphosphate), a reaction catalyzed by the N-terminal domain. The protein is Bifunctional protein GlmU of Lactobacillus johnsonii (strain CNCM I-12250 / La1 / NCC 533).